A 728-amino-acid chain; its full sequence is Catalase-peroxidase 1 (728 aa).

The first 22 residues, 1–22, serve as a signal peptide directing secretion; it reads MDKTQSSQGKCPVMHGANSAVA. The tryptophyl-tyrosyl-methioninium (Trp-Tyr) (with M-251) cross-link spans 97–225; sequence WHSAGTYRVA…LAAVMMGLIY (129 aa). His-98 (proton acceptor) is an active-site residue. Residues 225 to 251 constitute a cross-link (tryptophyl-tyrosyl-methioninium (Tyr-Met) (with W-97)); that stretch reads YVNPEGVDGKPDPLRTAQDVRVTFARM. Position 266 (His-266) interacts with heme b.

It belongs to the peroxidase family. Peroxidase/catalase subfamily. As to quaternary structure, homodimer or homotetramer. Requires heme b as cofactor. Post-translationally, formation of the three residue Trp-Tyr-Met cross-link is important for the catalase, but not the peroxidase activity of the enzyme.

It carries out the reaction H2O2 + AH2 = A + 2 H2O. The catalysed reaction is 2 H2O2 = O2 + 2 H2O. Its function is as follows. Bifunctional enzyme with both catalase and broad-spectrum peroxidase activity. The chain is Catalase-peroxidase 1 from Shewanella sp. (strain ANA-3).